Here is a 418-residue protein sequence, read N- to C-terminus: Histidinol dehydrogenase (418 aa).

Positions 119, 180, and 203 each coordinate NAD(+). 3 residues coordinate substrate: Thr-226, Gln-248, and His-251. Gln-248 and His-251 together coordinate Zn(2+). Active-site proton acceptor residues include Glu-316 and His-317. Residues His-317, Asp-350, Glu-404, and His-409 each coordinate substrate. Asp-350 contacts Zn(2+). His-409 serves as a coordination point for Zn(2+).

Belongs to the histidinol dehydrogenase family. It depends on Zn(2+) as a cofactor.

The catalysed reaction is L-histidinol + 2 NAD(+) + H2O = L-histidine + 2 NADH + 3 H(+). It participates in amino-acid biosynthesis; L-histidine biosynthesis; L-histidine from 5-phospho-alpha-D-ribose 1-diphosphate: step 9/9. Catalyzes the sequential NAD-dependent oxidations of L-histidinol to L-histidinaldehyde and then to L-histidine. This Staphylococcus aureus (strain MRSA252) protein is Histidinol dehydrogenase.